The following is a 384-amino-acid chain: tRNA-specific 2-thiouridylase MnmA (384 aa).

ATP contacts are provided by residues 18-25 (AMSGGVDS) and leucine 44. The active-site Nucleophile is the cysteine 112. A disulfide bond links cysteine 112 and cysteine 209. An ATP-binding site is contributed by glycine 136. Residues 159–161 (RDQ) form an interaction with tRNA region. The Cysteine persulfide intermediate role is filled by cysteine 209.

The protein belongs to the MnmA/TRMU family.

It is found in the cytoplasm. The enzyme catalyses S-sulfanyl-L-cysteinyl-[protein] + uridine(34) in tRNA + AH2 + ATP = 2-thiouridine(34) in tRNA + L-cysteinyl-[protein] + A + AMP + diphosphate + H(+). Its function is as follows. Catalyzes the 2-thiolation of uridine at the wobble position (U34) of tRNA, leading to the formation of s(2)U34. This Methylobacterium radiotolerans (strain ATCC 27329 / DSM 1819 / JCM 2831 / NBRC 15690 / NCIMB 10815 / 0-1) protein is tRNA-specific 2-thiouridylase MnmA.